Here is a 165-residue protein sequence, read N- to C-terminus: ATP synthase subunit b (165 aa).

A helical transmembrane segment spans residues 5 to 25; it reads LVGITWEFVFQIVNTFIIFLL.

The protein belongs to the ATPase B chain family. In terms of assembly, F-type ATPases have 2 components, F(1) - the catalytic core - and F(0) - the membrane proton channel. F(1) has five subunits: alpha(3), beta(3), gamma(1), delta(1), epsilon(1). F(0) has three main subunits: a(1), b(2) and c(10-14). The alpha and beta chains form an alternating ring which encloses part of the gamma chain. F(1) is attached to F(0) by a central stalk formed by the gamma and epsilon chains, while a peripheral stalk is formed by the delta and b chains.

It is found in the cell membrane. Functionally, f(1)F(0) ATP synthase produces ATP from ADP in the presence of a proton or sodium gradient. F-type ATPases consist of two structural domains, F(1) containing the extramembraneous catalytic core and F(0) containing the membrane proton channel, linked together by a central stalk and a peripheral stalk. During catalysis, ATP synthesis in the catalytic domain of F(1) is coupled via a rotary mechanism of the central stalk subunits to proton translocation. Component of the F(0) channel, it forms part of the peripheral stalk, linking F(1) to F(0). The sequence is that of ATP synthase subunit b from Clostridioides difficile (strain 630) (Peptoclostridium difficile).